Consider the following 97-residue polypeptide: Defensin-A2 (97 aa).

A signal peptide spans 1–19 (MRTLSLLLALLFLAAQTLA). A propeptide spanning residues 20–61 (QPIDEGAEEVITEEPEITETQDPTTIMLIERGIGGDSTDATR) is cleaved from the precursor. 3 cysteine pairs are disulfide-bonded: C66–C93, C68–C82, and C72–C92. A propeptide spanning residues 96 to 97 (TS) is cleaved from the precursor.

The protein belongs to the alpha-defensin family. In terms of tissue distribution, highly expressed in intestine, expressed at lower levels in spleen, and at very low levels in kidney and lung.

The protein localises to the secreted. Has antimicrobial activity. The sequence is that of Defensin-A2 from Ornithorhynchus anatinus (Duckbill platypus).